Reading from the N-terminus, the 121-residue chain is NAD(P)H-quinone oxidoreductase subunit 3, chloroplastic (121 aa).

The next 3 helical transmembrane spans lie at 10–30 (FFIF…ISKF), 65–85 (MFAL…PWAM), and 90–110 (LGLS…IGLV).

The protein belongs to the complex I subunit 3 family. As to quaternary structure, NDH is composed of at least 16 different subunits, 5 of which are encoded in the nucleus.

The protein resides in the plastid. The protein localises to the chloroplast thylakoid membrane. The enzyme catalyses a plastoquinone + NADH + (n+1) H(+)(in) = a plastoquinol + NAD(+) + n H(+)(out). It carries out the reaction a plastoquinone + NADPH + (n+1) H(+)(in) = a plastoquinol + NADP(+) + n H(+)(out). Its function is as follows. NDH shuttles electrons from NAD(P)H:plastoquinone, via FMN and iron-sulfur (Fe-S) centers, to quinones in the photosynthetic chain and possibly in a chloroplast respiratory chain. The immediate electron acceptor for the enzyme in this species is believed to be plastoquinone. Couples the redox reaction to proton translocation, and thus conserves the redox energy in a proton gradient. The polypeptide is NAD(P)H-quinone oxidoreductase subunit 3, chloroplastic (Physcomitrium patens (Spreading-leaved earth moss)).